Here is a 1976-residue protein sequence, read N- to C-terminus: Myosin-10 (1976 aa).

R18 bears the Omega-N-methylarginine mark. The Myosin N-terminal SH3-like domain occupies 31–81 (TAKKLVWIPSERHGFEAASIKEERGDEVMVELAENGKKAMVNKDDIQKMNP). Residues 85–783 (SKVEDMAELT…VLAHLEEERD (699 aa)) form the Myosin motor domain. Position 178-185 (178-185 (GESGAGKT)) interacts with ATP. K442 carries the N6-acetyllysine modification. The tract at residues 661-683 (LTKLMATLRNTNPNFVRCIIPNH) is actin-binding. In terms of domain architecture, IQ spans 786–815 (ITDIIIFFQAVCRGYLARKAFAKKQQQLSA). The stretch at 845-1976 (LQVTRQEEEL…VNDTQPPQSE (1132 aa)) forms a coiled coil. A disordered region spans residues 1125–1175 (EDFESEKASRNKAEKQKRDLSEELEALKTELEDTLDTTAAQQELRTKREQE). Over residues 1129 to 1155 (SEKASRNKAEKQKRDLSEELEALKTEL) the composition is skewed to basic and acidic residues. S1145 carries the post-translational modification Phosphoserine. K1241, K1301, and K1645 each carry N6-acetyllysine. 2 disordered regions span residues 1697–1718 (ASSE…DEIA) and 1874–1976 (KANA…PQSE). Residues 1698-1708 (SSERARRHAEQ) show a composition bias toward basic and acidic residues. An Omega-N-methylarginine modification is found at R1930. A phosphoserine mark is found at S1935, S1937, S1938, and S1939. Residue R1940 is modified to Omega-N-methylarginine. Phosphoserine is present on residues S1952 and S1956. T1960 carries the phosphothreonine modification. Over residues 1967–1976 (VNDTQPPQSE) the composition is skewed to polar residues. S1975 is modified (phosphoserine).

It belongs to the TRAFAC class myosin-kinesin ATPase superfamily. Myosin family. Myosin is a hexameric protein that consists of 2 heavy chain subunits (MHC), 2 alkali light chain subunits (MLC) and 2 regulatory light chain subunits (MLC-2). Interacts with PLEKHG6. Interacts with ECPAS. Interacts with LARP6. Interacts with MCC. Interacts with KIF26B. Interacts with CFAP95. Phosphorylated by ABL2. In terms of tissue distribution, in newborn kidney, expressed in the mesenchyme and ureteric buds.

Its subcellular location is the cell projection. The protein resides in the lamellipodium. Its function is as follows. Involved with LARP6 in the stabilization of type I collagen mRNAs for CO1A1 and CO1A2. During cell spreading, plays an important role in cytoskeleton reorganization, focal contacts formation (in the central part but not the margins of spreading cells), and lamellipodial extension; this function is mechanically antagonized by MYH9. Cellular myosin that appears to play a role in cytokinesis, cell shape, and specialized functions such as secretion and capping. The protein is Myosin-10 (Myh10) of Mus musculus (Mouse).